The chain runs to 723 residues: Enolase-phosphatase E1 (723 aa).

Residues 126–127 (SS) and Lys160 each bind substrate. Residues 239–723 (GAGAKRKIDE…TPTPPIEAES (485 aa)) are disordered. Composition is skewed to basic and acidic residues over residues 262–284 (VKKDENGDAAAKKDETAKVDEPA) and 293–308 (AAKEEAAAPAEGKMEV). Residues 311–320 (AAAAAAPPAD) show a composition bias toward low complexity. 6 stretches are compositionally biased toward basic and acidic residues: residues 322-406 (AEEK…VVEE), 419-443 (AEEKEAEKKEEDKAAEPAAEKKPAE), 468-479 (EPAKEKPAEAEA), 487-496 (TKAEVVEKPA), 511-565 (SADK…KGEE), and 577-593 (VEAKEDAAKPEEKKSDA). Low complexity-rich tracts occupy residues 596 to 606 (VSTTTTTTSTE) and 636 to 647 (NGEAEPAAEAVV). Positions 653-666 (GKHEEKGDSDKEND) are enriched in basic and acidic residues.

It belongs to the HAD-like hydrolase superfamily. MasA/MtnC family. As to quaternary structure, monomer.

It localises to the cytoplasm. It is found in the nucleus. It catalyses the reaction 5-methylsulfanyl-2,3-dioxopentyl phosphate + H2O = 1,2-dihydroxy-5-(methylsulfanyl)pent-1-en-3-one + phosphate. Its pathway is amino-acid biosynthesis; L-methionine biosynthesis via salvage pathway; L-methionine from S-methyl-5-thio-alpha-D-ribose 1-phosphate: step 3/6. It functions in the pathway amino-acid biosynthesis; L-methionine biosynthesis via salvage pathway; L-methionine from S-methyl-5-thio-alpha-D-ribose 1-phosphate: step 4/6. In terms of biological role, bifunctional enzyme that catalyzes the enolization of 2,3-diketo-5-methylthiopentyl-1-phosphate (DK-MTP-1-P) into the intermediate 2-hydroxy-3-keto-5-methylthiopentenyl-1-phosphate (HK-MTPenyl-1-P), which is then dephosphorylated to form the acireductone 1,2-dihydroxy-3-keto-5-methylthiopentene (DHK-MTPene). The chain is Enolase-phosphatase E1 from Culex quinquefasciatus (Southern house mosquito).